The sequence spans 233 residues: GSK-3-binding protein FRAT2 (233 aa).

The segment at 1–24 (MPCRREEEEEAGEEAEGEEEEDDS) is disordered. Residues 7–24 (EEEEAGEEAEGEEEEDDS) show a composition bias toward acidic residues. The segment at 174–196 (DPHRLLQQLVLSGNLIKEAVRRL) is involved in GSK-3 binding. Residues 204–233 (AATGPASAPGPGGGRSGPDRIALQPSGSLL) are disordered.

This sequence belongs to the GSK-3-binding protein family. As to quaternary structure, binds GSK-3 and prevents GSK-3-dependent phosphorylation.

Its function is as follows. Positively regulates the Wnt signaling pathway by stabilizing beta-catenin through the association with GSK-3. This Homo sapiens (Human) protein is GSK-3-binding protein FRAT2 (FRAT2).